The primary structure comprises 398 residues: Phosphoglycerate kinase (398 aa).

Residues 22-24 (DFN), Arg-38, 61-64 (HLGR), Arg-120, and Arg-153 each bind substrate. ATP is bound by residues Lys-204, Glu-326, and 352 to 355 (GGDT).

Belongs to the phosphoglycerate kinase family. In terms of assembly, monomer.

It localises to the cytoplasm. The catalysed reaction is (2R)-3-phosphoglycerate + ATP = (2R)-3-phospho-glyceroyl phosphate + ADP. It participates in carbohydrate degradation; glycolysis; pyruvate from D-glyceraldehyde 3-phosphate: step 2/5. The protein is Phosphoglycerate kinase of Geobacter metallireducens (strain ATCC 53774 / DSM 7210 / GS-15).